A 124-amino-acid chain; its full sequence is Holo-[acyl-carrier-protein] synthase (124 aa).

Mg(2+) is bound by residues D8 and E55.

It belongs to the P-Pant transferase superfamily. AcpS family. Requires Mg(2+) as cofactor.

The protein resides in the cytoplasm. The catalysed reaction is apo-[ACP] + CoA = holo-[ACP] + adenosine 3',5'-bisphosphate + H(+). Transfers the 4'-phosphopantetheine moiety from coenzyme A to a Ser of acyl-carrier-protein. In Desulfovibrio desulfuricans (strain ATCC 27774 / DSM 6949 / MB), this protein is Holo-[acyl-carrier-protein] synthase.